A 259-amino-acid chain; its full sequence is Proteasome subunit alpha (259 aa).

It belongs to the peptidase T1A family. The 20S proteasome core is composed of 14 alpha and 14 beta subunits that assemble into four stacked heptameric rings, resulting in a barrel-shaped structure. The two inner rings, each composed of seven catalytic beta subunits, are sandwiched by two outer rings, each composed of seven alpha subunits. The catalytic chamber with the active sites is on the inside of the barrel. Has a gated structure, the ends of the cylinder being occluded by the N-termini of the alpha-subunits. Is capped at one or both ends by the proteasome regulatory ATPase, PAN.

It is found in the cytoplasm. With respect to regulation, the formation of the proteasomal ATPase PAN-20S proteasome complex, via the docking of the C-termini of PAN into the intersubunit pockets in the alpha-rings, triggers opening of the gate for substrate entry. Interconversion between the open-gate and close-gate conformations leads to a dynamic regulation of the 20S proteasome proteolysis activity. Its function is as follows. Component of the proteasome core, a large protease complex with broad specificity involved in protein degradation. In Methanococcus maripaludis (strain C7 / ATCC BAA-1331), this protein is Proteasome subunit alpha.